Consider the following 297-residue polypeptide: Tyrosine recombinase XerD (297 aa).

Positions 2-86 (KKLDPIIEQF…CLRKFFRFLC (85 aa)) constitute a Core-binding (CB) domain. In terms of domain architecture, Tyr recombinase spans 107 to 291 (QLPKSLSEEQ…AKTRLKSIHK (185 aa)). Active-site residues include Arg147, Lys171, His243, Arg246, and His269. The active-site O-(3'-phospho-DNA)-tyrosine intermediate is the Tyr278.

Belongs to the 'phage' integrase family. XerD subfamily. As to quaternary structure, forms a cyclic heterotetrameric complex composed of two molecules of XerC and two molecules of XerD.

Its subcellular location is the cytoplasm. Site-specific tyrosine recombinase, which acts by catalyzing the cutting and rejoining of the recombining DNA molecules. The XerC-XerD complex is essential to convert dimers of the bacterial chromosome into monomers to permit their segregation at cell division. It also contributes to the segregational stability of plasmids. The protein is Tyrosine recombinase XerD of Haemophilus ducreyi (strain 35000HP / ATCC 700724).